The sequence spans 984 residues: MRLLSFIYLVWLALLTGTPQVSATDNGKTSDVAWDKYSLSVKGERLFVFSGEFHYQRLPVPELWLDVFQKLRANGFNTISVYFFWSYHSASEDVFDFTTGAHDIQRLFDYAKQAGLYVIARAGPYCNAETSAGGFALWAANGQMGSERTSDEAYYKKWKPWILEVGKIIAANQITNGGPVILNQHENELQETTYDSNDTKVIYMEQVAKAFEEAGVVVPSSHNEKGMRTVSWSTDYKNVGGAVNVYGLDSYPGSLSCANPNSGFNLLRTYYQWFQNYSYTQPEYLAEFEGGWFQPWGGSFYDSCASELSPEFADVYYKNNIGSRVTLHNIYMTFGGTNWGHSAAPVVYTSYDYGSPLRETREIRDKLKQTKLLGLFTRVSKDLLKTYMEGNGTSYTSDDSIYTWALRNPDSDAGFYVVAHNTSSSREVTTFSLNITTSAGALTIPDIELDGRQSKIIVTDYSIGSESSLLYSSAEVLTYATLDVDVLVFYLNAGQKGAFVFKDAPADLKYQTYGNSNLSALETSQGTQYSYTQGEGVTAVKFSNGVLVYLLDKETAWNFFAPPTVSSPTVAPNEHILVFGPYLVRGASIKHDTVEIVGDNSNSTSIEIYTGDEHVKKVSWNGNLIDTRATAYGSLIGTVPGAEDIEISLPSLSSWKAQDTLPEISPDYDDSRWTICNKTTSVNSVAPLSLPVLYSGDYGYHTGTKIYRGRFDGQNATGANVTVQNGVAAGWAAWLNGAYVGGFSGDPDKVASWEVLKFNHSSLRSRDNVLTIITDYTGHDQNSQKPIGTQNPRGIMGATLIGGGNFTLWRIQGNAGGEKNIDPVRGPMNEGGLYGERMGWHLPGYQVPESALDSSPLEGVSGAEGRFYTTSFQLDLEEDLDVPIGLQLSAPAGTEAVVQIFMNGYQFGHYLPHIGPQSLFPFPPGVIYNRGQNSLAISMWALTDAGARLEQVELKAYAKYRSGFDFNRDWTYLQPGWKDRTEYA.

An N-terminal signal peptide occupies residues 1–23 (MRLLSFIYLVWLALLTGTPQVSA). Substrate-binding residues include tyrosine 82, asparagine 127, alanine 128, glutamate 129, and asparagine 187. Glutamate 188 serves as the catalytic Proton donor. A glycan (N-linked (GlcNAc...) asparagine) is linked at asparagine 197. Tyrosine 251 provides a ligand contact to substrate. Cysteine 257 and cysteine 304 are oxidised to a cystine. An N-linked (GlcNAc...) asparagine glycan is attached at asparagine 276. Catalysis depends on glutamate 287, which acts as the Nucleophile. Residue tyrosine 353 coordinates substrate. Residues asparagine 391, asparagine 421, asparagine 434, asparagine 517, asparagine 602, asparagine 677, asparagine 715, asparagine 720, asparagine 759, and asparagine 805 are each glycosylated (N-linked (GlcNAc...) asparagine).

It belongs to the glycosyl hydrolase 35 family.

Its subcellular location is the secreted. The catalysed reaction is Hydrolysis of terminal non-reducing beta-D-galactose residues in beta-D-galactosides.. In terms of biological role, cleaves beta-linked terminal galactosyl residues from gangliosides, glycoproteins, and glycosaminoglycans. The chain is Probable beta-galactosidase C (lacC) from Aspergillus flavus (strain ATCC 200026 / FGSC A1120 / IAM 13836 / NRRL 3357 / JCM 12722 / SRRC 167).